The primary structure comprises 384 residues: MDNSMKNIFRQGRLFIALSLAMTSISAFALTQQEVDDIIKPLMKQEQIPGMSVAISVNGKQAIYHYGVQSKQTQIPVSDRTLYEIGSLSKTFTATLATYAQIQGKLDFSQSVSHYLPELKGSAFDNVSVMNLATHTSGLSLFVPSDIKTNDQLMAYYQKWLPDNEVGQYRSYSNLGVGLLGIVTAKQLNMPFSQAMEKLMLPSLGLKHTYIHVPKSQEKYYAQGYNKQNQPVRLNLEILGPEAYGLKSNAKDLIRYLEINMQSIKVAKTWQEAIENTHTGVYLTDSFVQDMMWESYPWPVSLSQLLQGNRDDMALKPQKVELIKPAMAPEVRAYYNKTGSSNGFATYAIFIPEEKIAIVMLSNKWIPIPQRITATYQLLEKIER.

A signal peptide spans 1–29 (MDNSMKNIFRQGRLFIALSLAMTSISAFA). S87 (acyl-ester intermediate) is an active-site residue. The active-site Proton acceptor is Y172. 337–339 (KTG) lines the substrate pocket.

Belongs to the class-C beta-lactamase family.

The protein resides in the periplasm. It carries out the reaction a beta-lactam + H2O = a substituted beta-amino acid. In terms of biological role, this protein is a serine beta-lactamase with a substrate specificity for cephalosporins. This is Beta-lactamase (ampC) from Providencia stuartii.